We begin with the raw amino-acid sequence, 597 residues long: Putative Xaa-Pro dipeptidyl-peptidase (597 aa).

Catalysis depends on charge relay system residues serine 224, aspartate 336, and histidine 367.

This sequence belongs to the peptidase S15 family.

It catalyses the reaction Hydrolyzes Xaa-Pro-|- bonds to release unblocked, N-terminal dipeptides from substrates including Ala-Pro-|-p-nitroanilide and (sequentially) Tyr-Pro-|-Phe-Pro-|-Gly-Pro-|-Ile.. This chain is Putative Xaa-Pro dipeptidyl-peptidase, found in Bacillus anthracis.